A 279-amino-acid chain; its full sequence is Bifunctional protein FolD (279 aa).

NADP(+) contacts are provided by residues 165–167 (GRS), serine 190, and isoleucine 231.

This sequence belongs to the tetrahydrofolate dehydrogenase/cyclohydrolase family. Homodimer.

It catalyses the reaction (6R)-5,10-methylene-5,6,7,8-tetrahydrofolate + NADP(+) = (6R)-5,10-methenyltetrahydrofolate + NADPH. The enzyme catalyses (6R)-5,10-methenyltetrahydrofolate + H2O = (6R)-10-formyltetrahydrofolate + H(+). Its pathway is one-carbon metabolism; tetrahydrofolate interconversion. Catalyzes the oxidation of 5,10-methylenetetrahydrofolate to 5,10-methenyltetrahydrofolate and then the hydrolysis of 5,10-methenyltetrahydrofolate to 10-formyltetrahydrofolate. The polypeptide is Bifunctional protein FolD (Halalkalibacterium halodurans (strain ATCC BAA-125 / DSM 18197 / FERM 7344 / JCM 9153 / C-125) (Bacillus halodurans)).